The chain runs to 404 residues: Keratin, type I cuticular Ha3-II (404 aa).

The head stretch occupies residues 1-56 (MPYNFCLPSLSCRTSCSSRPCVPPSCHGYTLPGACNIPANVSNCNWFCEGSFNGSE). In terms of domain architecture, IF rod spans 56–367 (EKETMQFLND…SLLESEDCKL (312 aa)). The coil 1A stretch occupies residues 57-91 (KETMQFLNDRLASYLEKVRQLERDNAELENLIRER). Residues 92-102 (SQQQEPLLCPS) are linker 1. Positions 103-203 (YQSYFKTIEE…HEQEVNTLRC (101 aa)) are coil 1B. Residues 204 to 219 (QLGDRLNVEVDAAPAV) are linker 12. The tract at residues 220–363 (DLNQVLNETR…NTYRSLLESE (144 aa)) is coil 2. The tail stretch occupies residues 364 to 404 (DCKLPSNPCATTNACEKPIGSCVTNPCGPRSRCGPCNTFGY).

Belongs to the intermediate filament family.

This Homo sapiens (Human) protein is Keratin, type I cuticular Ha3-II (KRT33B).